A 59-amino-acid chain; its full sequence is DNA gyrase inhibitor YacG (59 aa).

Residues cysteine 7, cysteine 10, cysteine 25, and cysteine 29 each contribute to the Zn(2+) site.

The protein belongs to the DNA gyrase inhibitor YacG family. As to quaternary structure, interacts with GyrB. It depends on Zn(2+) as a cofactor.

Its function is as follows. Inhibits all the catalytic activities of DNA gyrase by preventing its interaction with DNA. Acts by binding directly to the C-terminal domain of GyrB, which probably disrupts DNA binding by the gyrase. The protein is DNA gyrase inhibitor YacG of Geobacter sulfurreducens (strain ATCC 51573 / DSM 12127 / PCA).